Consider the following 262-residue polypeptide: Small ribosomal subunit protein uS2 (262 aa).

The interval 228–262 is disordered; it reads VSNEEVAAEQNINLDDKEESEQAETTEENTSVESN. The span at 243–254 shows a compositional bias: acidic residues; sequence DKEESEQAETTE.

The protein belongs to the universal ribosomal protein uS2 family.

The sequence is that of Small ribosomal subunit protein uS2 from Staphylococcus epidermidis (strain ATCC 35984 / DSM 28319 / BCRC 17069 / CCUG 31568 / BM 3577 / RP62A).